A 146-amino-acid polypeptide reads, in one-letter code: Cytidine deaminase (146 aa).

In terms of domain architecture, CMP/dCMP-type deaminase spans 13-140; sequence ECVQQLLVCS…ELLPSSFGPE (128 aa). Substrate is bound at residue 54-60; that stretch reads NIENACY. Cys-65 is a Zn(2+) binding site. Glu-67 functions as the Proton donor in the catalytic mechanism. Positions 99 and 102 each coordinate Zn(2+).

It belongs to the cytidine and deoxycytidylate deaminase family. As to quaternary structure, homotetramer. Zn(2+) serves as cofactor. As to expression, highly expressed in granulocytes while expression is very low in fibroblasts, chondrocytes, monocytes, and T- as well as B-cell lines.

The catalysed reaction is cytidine + H2O + H(+) = uridine + NH4(+). The enzyme catalyses 2'-deoxycytidine + H2O + H(+) = 2'-deoxyuridine + NH4(+). Functionally, this enzyme scavenges exogenous and endogenous cytidine and 2'-deoxycytidine for UMP synthesis. In Homo sapiens (Human), this protein is Cytidine deaminase.